Reading from the N-terminus, the 133-residue chain is Large ribosomal subunit protein eL32 (133 aa).

This sequence belongs to the eukaryotic ribosomal protein eL32 family.

This Dictyostelium discoideum (Social amoeba) protein is Large ribosomal subunit protein eL32 (rpl32).